A 279-amino-acid chain; its full sequence is Probable endonuclease 4 (279 aa).

Positions 69, 109, 145, 179, 182, 216, 229, 231, and 261 each coordinate Zn(2+).

The protein belongs to the AP endonuclease 2 family. Zn(2+) serves as cofactor.

The enzyme catalyses Endonucleolytic cleavage to 5'-phosphooligonucleotide end-products.. In terms of biological role, endonuclease IV plays a role in DNA repair. It cleaves phosphodiester bonds at apurinic or apyrimidinic (AP) sites, generating a 3'-hydroxyl group and a 5'-terminal sugar phosphate. This Serratia proteamaculans (strain 568) protein is Probable endonuclease 4.